Consider the following 94-residue polypeptide: uncharacterized protein (94 aa).

Residues 33 to 42 show a composition bias toward polar residues; sequence INSLPTFTKP. The interval 33–57 is disordered; that stretch reads INSLPTFTKPNDSNNNVNKSSNDGV. The span at 43 to 57 shows a compositional bias: low complexity; the sequence is NDSNNNVNKSSNDGV.

This is an uncharacterized protein from Dictyostelium discoideum (Social amoeba).